We begin with the raw amino-acid sequence, 746 residues long: Steroid receptor seven-up, isoform A (746 aa).

Positions 38–191 are disordered; the sequence is PPHSAWHEPP…HSQSSNSGSQ (154 aa). The segment covering 56-68 has biased composition (low complexity); sequence AASAGPGTTTGSV. Positions 83 to 101 are enriched in polar residues; it reads QQSAVIKQDLSCPSLNQAG. The segment covering 122 to 141 has biased composition (gly residues); sequence GSAGGHHSGSGSGSGSGVNP. The segment covering 158–170 has biased composition (polar residues); it reads MLTSIKGQPTGCG. Low complexity predominate over residues 171–191; the sequence is STTPSSQANSSHSQSSNSGSQ. A DNA-binding region (nuclear receptor) is located at residues 197–272; that stretch reads NIECVVCGDK…MGMRREAVQR (76 aa). NR C4-type zinc fingers lie at residues 200–220 and 236–260; these read CVVC…CEGC and CRGS…LKKC. The 250-residue stretch at 307–556 folds into the NR LBD domain; the sequence is YLSSYISLLL…PLVPSAGSAF (250 aa). A disordered region spans residues 579–645; that stretch reads QATPPSSGGG…APAPVPTSSV (67 aa). Polar residues predominate over residues 592-605; that stretch reads GHNNSSGLGASLPT. The segment covering 606–645 has biased composition (low complexity); that stretch reads QSQSGSSSRNLTASPLSTSLATAPAPASASAPAPVPTSSV.

It belongs to the nuclear hormone receptor family. NR2 subfamily. In terms of tissue distribution, expressed in several embryonic tissues; dorsal vessel, oenocyte and fat body. CNS expression is dynamic and confined to temporally restricted subsections of the NB lineage; expressed in many NB and GMCs, but only a small number of neurons.

The protein resides in the nucleus. Functionally, receptor that is required in photoreceptors R1, R3, R4 and R6 during eye development; generation of the ganglion mother cell-2 (GMC-2) fate in the nb7-3 lineage, coinciding with the transition in the expression of HB to KR in the neuroblasts (NBs). This chain is Steroid receptor seven-up, isoform A (svp), found in Drosophila melanogaster (Fruit fly).